The following is a 243-amino-acid chain: L-fucose operon activator (243 aa).

Residues 1–57 (MKAARQQAIVDLLLNHTSLTTEALSEQLKVSKETIRRDLNELQTQGKILRNHGRAKY) form the HTH deoR-type domain. The H-T-H motif DNA-binding region spans 19–38 (LTTEALSEQLKVSKETIRRD).

Transcriptional activator of the fuc operon. In Escherichia coli (strain K12), this protein is L-fucose operon activator (fucR).